Here is a 118-residue protein sequence, read N- to C-terminus: Holo-[acyl-carrier-protein] synthase (118 aa).

2 residues coordinate Mg(2+): Asp-8 and Glu-58.

Belongs to the P-Pant transferase superfamily. AcpS family. Mg(2+) is required as a cofactor.

It localises to the cytoplasm. The enzyme catalyses apo-[ACP] + CoA = holo-[ACP] + adenosine 3',5'-bisphosphate + H(+). Its function is as follows. Transfers the 4'-phosphopantetheine moiety from coenzyme A to a Ser of acyl-carrier-protein. In Streptococcus pyogenes serotype M28 (strain MGAS6180), this protein is Holo-[acyl-carrier-protein] synthase.